The chain runs to 529 residues: GTPase Obg (529 aa).

An Obg domain is found at 2–159 (PTFVDRVVLH…LDAVLELKTV (158 aa)). A disordered region spans residues 62 to 86 (FHPHQRASRGRPGQGSNRHGADGAD). The region spanning 160-332 (ADVALVGFPS…LSLALADLVA (173 aa)) is the OBG-type G domain. GTP is bound by residues 166–173 (GFPSAGKS), 191–195 (FTTLV), 213–216 (DVPG), 284–287 (NKID), and 313–315 (STA). 2 residues coordinate Mg(2+): serine 173 and threonine 193. Residues 350–427 (PRAVNEPDFT…IGEVTFDWEP (78 aa)) form the OCT domain. 2 disordered regions span residues 434-494 (LGNG…DRLR) and 506-529 (ARRA…EEEG). 2 stretches are compositionally biased toward low complexity: residues 461–472 (AGTAASGAAPSP) and 508–520 (RAAA…VRGE).

Belongs to the TRAFAC class OBG-HflX-like GTPase superfamily. OBG GTPase family. Monomer. Requires Mg(2+) as cofactor.

The protein resides in the cytoplasm. An essential GTPase which binds GTP, GDP and possibly (p)ppGpp with moderate affinity, with high nucleotide exchange rates and a fairly low GTP hydrolysis rate. Plays a role in control of the cell cycle, stress response, ribosome biogenesis and in those bacteria that undergo differentiation, in morphogenesis control. This chain is GTPase Obg, found in Frankia casuarinae (strain DSM 45818 / CECT 9043 / HFP020203 / CcI3).